Consider the following 238-residue polypeptide: Ribonuclease PH (238 aa).

Residues 64 to 86 form a disordered region; sequence GMLPRSTGSRMDREAARGKQSGR. Phosphate is bound by residues R86 and 124 to 126; that span reads GTR.

The protein belongs to the RNase PH family. In terms of assembly, homohexameric ring arranged as a trimer of dimers.

The enzyme catalyses tRNA(n+1) + phosphate = tRNA(n) + a ribonucleoside 5'-diphosphate. Functionally, phosphorolytic 3'-5' exoribonuclease that plays an important role in tRNA 3'-end maturation. Removes nucleotide residues following the 3'-CCA terminus of tRNAs; can also add nucleotides to the ends of RNA molecules by using nucleoside diphosphates as substrates, but this may not be physiologically important. Probably plays a role in initiation of 16S rRNA degradation (leading to ribosome degradation) during starvation. The sequence is that of Ribonuclease PH from Methylobacillus flagellatus (strain ATCC 51484 / DSM 6875 / VKM B-1610 / KT).